The sequence spans 424 residues: Tubulin-specific chaperone cofactor E-like protein (424 aa).

2 positions are modified to phosphoserine: Ser-18 and Ser-41. LRR repeat units follow at residues 73-98, 99-123, 124-147, 150-172, 173-197, 199-224, and 226-250; these read CAHV…IVSN, VPQL…TCAG, SFSG…HMIL, LPDL…PSIC, CHSL…KLGV, FPSL…SLAR, and FPNL…KLNS. An LRRCT domain is found at 262–303; sequence IPLLQPYTTEERRKLVIARLPSVSKLNGSVVTDGEREDSERF. In terms of domain architecture, Ubiquitin-like spans 334–424; sequence AEVDLRPQSS…DKIYVESKTK (91 aa). Residues 349–375 are a coiled coil; sequence HFNDQVEEMSIRLDQTVAELKKQLKTL.

In terms of tissue distribution, abundantly expressed in testis, but is also present in several tissues at a much lower level.

It is found in the cytoplasm. It localises to the cytoskeleton. Functionally, acts as a regulator of tubulin stability. The chain is Tubulin-specific chaperone cofactor E-like protein (TBCEL) from Homo sapiens (Human).